Here is a 307-residue protein sequence, read N- to C-terminus: Histone deacetylase HDT1 (307 aa).

Over residues Glu98–Leu112 the composition is skewed to acidic residues. Residues Glu98–Pro280 are disordered. The span at Glu119 to Glu132 shows a compositional bias: basic and acidic residues. Positions Asp151–Thr197 are enriched in acidic residues. The span at Pro198–Ala211 shows a compositional bias: basic and acidic residues. The segment covering Ser265–Pro277 has biased composition (low complexity). The C2H2-type; degenerate zinc-finger motif lies at Val276–Met299.

This sequence belongs to the histone deacetylase HD2 family. In terms of assembly, multimer. Isolated as a trimer composed of 3 proteins of 39, 42 and 45 kDa, possibly a homotrimer with different phosphorylation status or a heterotrimer with HDT2 and/or HDT3. The N-terminus is blocked. Post-translationally, phosphorylated. Required for enzyme activity.

The protein localises to the nucleus. The protein resides in the nucleolus. Its activity is regulated as follows. Inhibited by 3-(4-Aroyl-1-methyl-1H-pyrrol-2-yl)-N-hydroxy-2-propenamides. 3-(1-methyl-4-phenylacetyl-1H-pyrrol-2-yl)-N-hydroxy-2-propenamide 1b and 3-[1-methyl-4-(3-phenyl-2-propenoyl)-1H-pyrrol-2-yl]-N-hydroxy-2-propenamide 1c are very potent inhibitors. Functionally, mediates the deacetylation of lysine residues on the N-terminal part of the core histones (H2A, H2B, H3 and H4). Histone deacetylation gives a tag for epigenetic repression and plays an important role in transcriptional regulation, cell cycle progression and developmental events. Able to deacetylate all 4 core histones. This chain is Histone deacetylase HDT1 (HDT1), found in Zea mays (Maize).